A 277-amino-acid polypeptide reads, in one-letter code: MLRVRILLIYLCTFVVITSTKTIEYTACNDTIIIPCTIDNPTKYIRWKLDNHNILTYNKTSKTIILSKWHTSAKLHSLSDNDVSLIIKYKDILPGTYTCEDNTGIKSTVKLVQRHTNWFNDHHTMLMFIFTGITLFLLFLEIAYTSISVVFSTNLGILQVFGCIIAMIELCGAFLFYPSMFTLRHIIGLLMMTLPSIFLIITKVFSFWLLCKLSCAVHLIIYYQLAGYILTVLGLGLSLKECVDGTLLLSGLGTIMVSEHFSLLFLVCFPSTQRDYY.

2 N-linked (GlcNAc...) asparagine; by host glycosylation sites follow: asparagine 29 and asparagine 58. 5 helical membrane-spanning segments follow: residues 124–144, 156–176, 186–206, 219–239, and 247–267; these read TMLMFIFTGITLFLLFLEIAY, GILQVFGCIIAMIELCGAFLF, IIGLLMMTLPSIFLIITKVFS, LIIYYQLAGYILTVLGLGLSL, and LLLSGLGTIMVSEHFSLLFLV.

Belongs to the orthopoxvirus OPG166 protein family.

Its subcellular location is the host membrane. Functionally, promotes, when overexpressed, the influx of extracellular Ca(2+), leading to membrane permeability and host cell necrosis. The polypeptide is Protein OPG166 (OPG166) (Variola virus (isolate Human/India/Ind3/1967) (VARV)).